The sequence spans 821 residues: MNEVPTTPVRLILGQAQQREQNSENCSQERNPRTFNSEPDSSFNSPGSSQFVIHPHEPLEKEKDEKQDLDRSIDYGRSSALNNKNNANPLENIDINKMFDDKKSDSGTNDDKGGASTSDKHVLALNYSPIRVEMNSSEKRSDKNVDVDENDKEGSHINKKLKLQLESVPDLKQSSTKDIINDKEEIMSSPMAIDMIETNISPNKFIINDGVERNDSFNINTDTLKLENDINEKQQEEDFIKSNSNNVVNIDNAYKEKEDEENDITNSHINRLTPLYETSARESNSNEEGRNDYDDDNQLDIRHDNFQIVAKRNEELTDQIYHLNQMLNSLISKNESLSFQYEKLNKNHQLLIDLTNEKLDKLNTERESDIAKVEKFKKRIKELNTEIKVLNSNQKILQEKFDASITEVNHIKGEHENTVNTLQQNEKILNDKNVELENMKAELKGNNDKLSEYETTLNDLNSRIVQLNDKIESTDIVLKSKENELDNLKLSLKETLSISKDFNDSDLIGQINELISTKNNLQQKMDDLNNLNDDNLKVVQDKLIKNEETLKLKEAEIDSLNSEMDELKKQITSKDDEFKMWQSKYETVEDEAKIRNAEVTELNGDIEDLKESKLHLEETITELENKVHKLENECELEKQKFEKTSLELESLQLKNSNIQAEHIKELENLHENLISLQNELKISSDRITTLTKENEVLMEQNNNNNNSVTLSNDQKDRDDEKIKSLGKQVQDWKEKYEAKEKDTNKRLKLLAEDLYIQYSSKHEQKVKLLKKGYENKYQNKFDQLNLENKTLSEEIEQLNKQLSSEREEKQELLKLLENEKK.

2 disordered regions span residues 1–52 (MNEV…SQFV) and 99–153 (FDDK…NDKE). Phosphothreonine; by CDC28 is present on T7. Over residues 15 to 51 (QAQQREQNSENCSQERNPRTFNSEPDSSFNSPGSSQF) the composition is skewed to polar residues. Basic and acidic residues-rich tracts occupy residues 99 to 122 (FDDK…DKHV) and 136 to 153 (SSEK…NDKE). Phosphoserine is present on residues S188 and S189. Position 201 is a phosphoserine; by CDC28 (S201). Phosphoserine is present on S216. At T273 the chain carries Phosphothreonine. 2 disordered regions span residues 274-298 (PLYE…DDNQ) and 699-720 (EQNN…RDDE). S283 bears the Phosphoserine mark. Positions 310-821 (AKRNEELTDQ…LLKLLENEKK (512 aa)) form a coiled coil.

Post-translationally, cleaved by ESP1 at the onset of anaphase. In terms of processing, phosphorylated by CDC5/Polo-like kinase at the onset of anaphase. Phosphorylation takes places at proximity to cleavage sites and is required for an efficient cleavage by ESP1. Phosphorylated also by CDC28.

Its subcellular location is the chromosome. It is found in the centromere. The protein localises to the kinetochore. The protein resides in the cytoplasm. It localises to the cytoskeleton. Its subcellular location is the microtubule organizing center. It is found in the spindle pole body. Its function is as follows. Has a role in spindle assembly and stability. Required to ensure a timely exit form mitosis. Essential to maintain pre-anaphase spindle polarity. Associates to the plus ends of the microtubules at the kinetochore and spindle midzone. A component of the FEAR (CDC14 Early Anaphase Release) network which promotes CDC14 release from the nucleolus during early anaphase. Required for proper chromosome segregation during meiosis I where it prevents premature sister chromatid separation. The protein is Kinetochore protein SLK19 (SLK19) of Saccharomyces cerevisiae (strain ATCC 204508 / S288c) (Baker's yeast).